The primary structure comprises 568 residues: Nitrite reductase (568 aa).

The N-terminal stretch at 1-25 is a signal peptide; sequence MPFGKPLVGTLLASLTLLGLATAHA. The interval 26 to 54 is N-terminal tail; the sequence is KDDMKAAEQYQGAASAVDPAHVVRTNGAP. Positions 55–140 constitute a Cytochrome c domain; sequence DMSESEFNEA…AKYIQHTPPQ (86 aa). The heme c site is built by C72, C75, H76, R96, T109, and M113. Residues 141–568 form a D1-heme domain region; sequence PPEWGMPEMR…NVYNTQHDVY (428 aa). Residues H207, R250, S251, Y270, R397, and Q508 each contribute to the heme d1 site.

In terms of assembly, homodimer. It depends on heme c as a cofactor. Heme serves as cofactor.

The protein localises to the periplasm. The catalysed reaction is nitric oxide + Fe(III)-[cytochrome c] + H2O = Fe(II)-[cytochrome c] + nitrite + 2 H(+). It catalyses the reaction A + NH4(+) + H2O = hydroxylamine + AH2 + H(+). This is Nitrite reductase (nirS) from Pseudomonas aeruginosa (strain ATCC 15692 / DSM 22644 / CIP 104116 / JCM 14847 / LMG 12228 / 1C / PRS 101 / PAO1).